The sequence spans 200 residues: High frequency lysogenization protein HflD homolog (200 aa).

This sequence belongs to the HflD family.

It is found in the cytoplasm. The protein resides in the cell inner membrane. This Pseudoalteromonas translucida (strain TAC 125) protein is High frequency lysogenization protein HflD homolog.